A 370-amino-acid chain; its full sequence is tRNA pseudouridine(27/28) synthase (370 aa).

Asp56 serves as the catalytic Nucleophile. Tyr111 provides a ligand contact to substrate.

It belongs to the tRNA pseudouridine synthase TruA family.

It localises to the mitochondrion. The enzyme catalyses uridine(27/28) in mitochondrial tRNA = pseudouridine(27/28) in mitochondrial tRNA. In terms of biological role, mitochondrial-specific pseudouridine synthase catalyzing the formation of pseudouridine at positions 27 and 28 in the anticodon stem and loop of mitochondrial transfer RNAs. The polypeptide is tRNA pseudouridine(27/28) synthase (PUS2) (Saccharomyces cerevisiae (strain ATCC 204508 / S288c) (Baker's yeast)).